Reading from the N-terminus, the 72-residue chain is Alpha-elapitoxin-Ast2b (72 aa).

Cystine bridges form between C3-C20, C13-C41, C26-C30, C45-C56, and C57-C62. R72 carries the arginine amide modification.

Belongs to the three-finger toxin family. Long-chain subfamily. Type II alpha-neurotoxin sub-subfamily. As to expression, expressed by the venom gland.

It localises to the secreted. Functionally, binds with high affinity to muscular (alpha-1/CHRNA1) and neuronal (alpha-7/CHRNA7) nicotinic acetylcholine receptor (nAChR) and inhibits acetylcholine from binding to the receptor, thereby impairing neuromuscular and neuronal transmission. This Hydrophis stokesii (Stokes's sea snake) protein is Alpha-elapitoxin-Ast2b.